We begin with the raw amino-acid sequence, 716 residues long: 1,4-alpha-glucan branching enzyme GlgB (716 aa).

Asp-394 functions as the Nucleophile in the catalytic mechanism. Glu-447 (proton donor) is an active-site residue.

The protein belongs to the glycosyl hydrolase 13 family. GlgB subfamily. As to quaternary structure, monomer.

The enzyme catalyses Transfers a segment of a (1-&gt;4)-alpha-D-glucan chain to a primary hydroxy group in a similar glucan chain.. Its pathway is glycan biosynthesis; glycogen biosynthesis. In terms of biological role, catalyzes the formation of the alpha-1,6-glucosidic linkages in glycogen by scission of a 1,4-alpha-linked oligosaccharide from growing alpha-1,4-glucan chains and the subsequent attachment of the oligosaccharide to the alpha-1,6 position. The polypeptide is 1,4-alpha-glucan branching enzyme GlgB (Photobacterium profundum (strain SS9)).